The primary structure comprises 420 residues: Probable glycosyltransferase YdaM (420 aa).

The next 4 membrane-spanning stretches (helical) occupy residues 4 to 24 (TLFF…MFLM), 299 to 319 (IIFD…GVIM), 332 to 352 (LHLS…FLFM), and 371 to 391 (FFIV…LVIY).

This sequence belongs to the glycosyltransferase 2 family.

It is found in the cell membrane. This is Probable glycosyltransferase YdaM (ydaM) from Bacillus subtilis (strain 168).